The primary structure comprises 279 residues: Thymidylate synthase (279 aa).

DUMP is bound at residue 141–142; that stretch reads RR. The active-site Nucleophile is C161. DUMP-binding positions include 181–184, N192, and 222–224; these read RSND and HVY. D184 lines the (6R)-5,10-methylene-5,6,7,8-tetrahydrofolate pocket. A278 contacts (6R)-5,10-methylene-5,6,7,8-tetrahydrofolate.

Belongs to the thymidylate synthase family. Homodimer.

The catalysed reaction is dUMP + (6R)-5,10-methylene-5,6,7,8-tetrahydrofolate = 7,8-dihydrofolate + dTMP. It participates in pyrimidine metabolism; dTTP biosynthesis. In terms of biological role, provides the sole de novo source of dTMP for DNA biosynthesis. This Bacillus subtilis (Bacteriophage phi-3T) protein is Thymidylate synthase (thyP3).